Here is a 363-residue protein sequence, read N- to C-terminus: D-xylulose reductase (363 aa).

3 residues coordinate Zn(2+): Cys-41, His-66, and Glu-159. Gly-183–Gly-188 is an NAD(+) binding site.

Belongs to the zinc-containing alcohol dehydrogenase family. The cofactor is Zn(2+).

The catalysed reaction is xylitol + NAD(+) = D-xylulose + NADH + H(+). It participates in carbohydrate degradation; L-arabinose degradation via L-arabinitol; D-xylulose 5-phosphate from L-arabinose (fungal route): step 4/5. This is D-xylulose reductase (XYL2) from Scheffersomyces stipitis (strain ATCC 58785 / CBS 6054 / NBRC 10063 / NRRL Y-11545) (Yeast).